Reading from the N-terminus, the 293-residue chain is Probable metal transport system membrane protein CT_417 (293 aa).

7 helical membrane passes run 18-38 (SLLAAFGASIAAGIIGSYIVV), 41-61 (IVSISGSIAHSILGGVGIALW), 68-88 (LPISPLHGAIASAIFVAICIG), 101-121 (IISMIWSIGMAIGIICISKLP), 135-155 (ILWVTPQDLYFLGILDLFIVA), 187-207 (LLLILTAITTVVLMYVMGVIL), and 242-262 (FLGIMLAYLLDLPVGPVIAIL).

Belongs to the ABC-3 integral membrane protein family.

The protein resides in the cell inner membrane. Part of an ATP-driven transport system CT_415/CT_416/CT_417 for a metal. This chain is Probable metal transport system membrane protein CT_417, found in Chlamydia trachomatis serovar D (strain ATCC VR-885 / DSM 19411 / UW-3/Cx).